A 209-amino-acid chain; its full sequence is Kynurenine formamidase (209 aa).

Residue W19 participates in substrate binding. Residues H49, H53, and D55 each contribute to the Zn(2+) site. H59 functions as the Proton donor/acceptor in the catalytic mechanism. The Zn(2+) site is built by H160 and E172.

It belongs to the Cyclase 1 superfamily. KynB family. Homodimer. Zn(2+) serves as cofactor.

It carries out the reaction N-formyl-L-kynurenine + H2O = L-kynurenine + formate + H(+). The protein operates within amino-acid degradation; L-tryptophan degradation via kynurenine pathway; L-kynurenine from L-tryptophan: step 2/2. Its function is as follows. Catalyzes the hydrolysis of N-formyl-L-kynurenine to L-kynurenine, the second step in the kynurenine pathway of tryptophan degradation. The sequence is that of Kynurenine formamidase from Ralstonia nicotianae (strain ATCC BAA-1114 / GMI1000) (Ralstonia solanacearum).